We begin with the raw amino-acid sequence, 782 residues long: MARARAGALLALWVLGAAAHPQCLDFRPPFRPTQPLRLCAQYSDFGCCDEGRDAELTRRFWALASRVDAAEWAACAGYARDLLCQECSPYAAHLYDAEDPFTPLRTVPGLCQDYCLDMWHKCRGLFRHLSTDQELWALEGNLARFCRYLSLDDTDYCFPYLLVNKNLNSNLGHVVADAKGCLQLCLEEVANGLRNPVAMVHARDGTHRFFVAEQVGLVWAYLPDRSRLGKPFLNISRVVLTSPWEGDERGFLGIAFHPSFQHNRRLYVYYSVGIRSSEWIRISEFRVSEDDENAVDHSSERIILEVKEPASNHNGGQLLFGDDGYLYIFTGDGGMAGDPFGTFGNAQNKSALLGKVLRIDVDRKERGLPYGIPPDNPFVGDPAAQPEVYALGVRNMWRCSFDRGDPSSGTGRGRLFCGDVGQNKFEEVDVVERGGNYGWRAREGFECYDRSLCANTSLNDLLPIFAYPHTVGKSVTGGYVYRGCEYPNLNGLYIFGDFMSGRLMSLQENPGTGQWQYSEICMGHGQTCEFPGLINNYYPYIISFGEDEAGELYFMSTGEPSATAPRGVVYKIIDASRRAPPGKCQIQPAQVKIRSRLIPFVPKEKFIPKTRSTPRPTARAPTRAPRRGRPTAAPPAPTPRPARPTQQPGSRRGGGRRRGRLNSASRAFRDGEVRLVRPAGLSSGSGRVEVFVGGRWGTVCDDSWNISGAAVVCRQLGFAYAVRAVKRAEFGQGGSLPILLDDVRCAGWERNLLECQHNGVGTHNCEHDEDAGVVCSHQNPDL.

Positions M1–A19 are cleaved as a signal peptide. Cystine bridges form between C181-C521, C185-C528, C399-C417, and C484-C584. N234 is a glycosylation site (N-linked (GlcNAc...) asparagine). A disordered region spans residues E604–R666. Low complexity predominate over residues T610–R623. The span at A632–A642 shows a compositional bias: pro residues. Residues V673–S776 form the SRCR domain. 3 disulfides stabilise this stretch: C700/C765, C713/C775, and C745/C755.

It belongs to the HHIP family.

Its subcellular location is the secreted. In Homo sapiens (Human), this protein is HHIP-like protein 1 (HHIPL1).